The following is a 105-amino-acid chain: Large ribosomal subunit protein bL21 (105 aa).

Belongs to the bacterial ribosomal protein bL21 family. In terms of assembly, part of the 50S ribosomal subunit. Contacts protein L20.

This protein binds to 23S rRNA in the presence of protein L20. In Rickettsia canadensis (strain McKiel), this protein is Large ribosomal subunit protein bL21.